The following is an 845-amino-acid chain: U-box domain-containing protein 52 (845 aa).

Disordered stretches follow at residues 180–210 (RPSE…LPPE) and 229–258 (SPAL…EVST). A compositionally biased stretch (low complexity) spans 187–204 (SGSIRFERSSSTSGSTDS). Positions 236 to 251 (MGSNAVAQMDTSSSGT) are enriched in polar residues. Residues 351–468 (SITDNQVNLN…REKDKLQASL (118 aa)) are a coiled coil. Residues 490–754 (FAENLKIGIG…DLKDQIIPAL (265 aa)) form the Protein kinase domain. Residues 496–504 (IGIGAYGSV) and lysine 517 contribute to the ATP site. Catalysis depends on aspartate 612, which acts as the Proton acceptor. In terms of domain architecture, U-box spans 774-845 (GPPSHFICPL…AIMEWKSNKR (72 aa)).

Belongs to the protein kinase superfamily. Ser/Thr protein kinase family.

It carries out the reaction L-seryl-[protein] + ATP = O-phospho-L-seryl-[protein] + ADP + H(+). The enzyme catalyses L-threonyl-[protein] + ATP = O-phospho-L-threonyl-[protein] + ADP + H(+). The catalysed reaction is S-ubiquitinyl-[E2 ubiquitin-conjugating enzyme]-L-cysteine + [acceptor protein]-L-lysine = [E2 ubiquitin-conjugating enzyme]-L-cysteine + N(6)-ubiquitinyl-[acceptor protein]-L-lysine.. The protein operates within protein modification; protein ubiquitination. Functionally, functions as an E3 ubiquitin ligase. This chain is U-box domain-containing protein 52 (PUB52), found in Arabidopsis thaliana (Mouse-ear cress).